Here is a 437-residue protein sequence, read N- to C-terminus: Neomycin resistance protein (437 aa).

Disordered stretches follow at residues 161–285 (GQRG…EEEA) and 305–338 (VSGA…PVPD). Over residues 203-229 (PPTGARSPGATAGARATASTSSSSVRS) the composition is skewed to low complexity. Positions 324–338 (RRRHRGRRHGRPVPD) are enriched in basic residues.

It belongs to the Gram-positive plasmids replication protein type 1 family.

The chain is Neomycin resistance protein from Streptomyces cyanogenus.